The primary structure comprises 364 residues: Methylthioribose-1-phosphate isomerase (364 aa).

Substrate-binding positions include 46-48, Arg-89, and Gln-196; that span reads RGA. Asp-237 acts as the Proton donor in catalysis. Residue 247–248 participates in substrate binding; sequence NK.

The protein belongs to the eIF-2B alpha/beta/delta subunits family. MtnA subfamily.

The enzyme catalyses 5-(methylsulfanyl)-alpha-D-ribose 1-phosphate = 5-(methylsulfanyl)-D-ribulose 1-phosphate. Its pathway is amino-acid biosynthesis; L-methionine biosynthesis via salvage pathway; L-methionine from S-methyl-5-thio-alpha-D-ribose 1-phosphate: step 1/6. Catalyzes the interconversion of methylthioribose-1-phosphate (MTR-1-P) into methylthioribulose-1-phosphate (MTRu-1-P). In Pelotomaculum thermopropionicum (strain DSM 13744 / JCM 10971 / SI), this protein is Methylthioribose-1-phosphate isomerase.